Consider the following 156-residue polypeptide: Small ribosomal subunit protein uS7 (156 aa).

Belongs to the universal ribosomal protein uS7 family. In terms of assembly, part of the 30S ribosomal subunit. Contacts proteins S9 and S11.

Its function is as follows. One of the primary rRNA binding proteins, it binds directly to 16S rRNA where it nucleates assembly of the head domain of the 30S subunit. Is located at the subunit interface close to the decoding center, probably blocks exit of the E-site tRNA. The protein is Small ribosomal subunit protein uS7 of Dictyoglomus turgidum (strain DSM 6724 / Z-1310).